Reading from the N-terminus, the 573-residue chain is Trehalose synthase (573 aa).

Position 70 (Asp-70) interacts with substrate. Asn-112 is a binding site for Ca(2+). Substrate is bound by residues His-113 and Gln-178. Asp-180 is a binding site for Ca(2+). Arg-208 lines the substrate pocket. The active-site Nucleophile is Asp-210. Ca(2+) is bound by residues Tyr-214, Leu-215, and Glu-217. The active-site Proton donor is Glu-252. Residues His-326 and Asp-327 each coordinate substrate.

This sequence belongs to the glycosyl hydrolase 13 family. TreS subfamily.

It catalyses the reaction D-maltose = alpha,alpha-trehalose. In terms of biological role, catalyzes the reversible interconversion of maltose and alpha,alpha-trehalose by transglucosylation. The polypeptide is Trehalose synthase (treS) (Pimelobacter sp. (strain R48)).